A 156-amino-acid polypeptide reads, in one-letter code: MAIRRIEGLLHLASEGRYAILVGRFNSFVVEHLLEGAIDTLKRHGVNEDNITVIHAPGAWELPIVAKKLATSNQFDAIIALGAVIRGSTPHFDFVAGECAKGLGVVALESSLPVINGVLTTDSIEQAIERSGTKAGNKGSEAALTAIEMVNLLKAI.

5-amino-6-(D-ribitylamino)uracil contacts are provided by residues phenylalanine 25, 59–61 (AWE), and 83–85 (AVI). 88–89 (ST) provides a ligand contact to (2S)-2-hydroxy-3-oxobutyl phosphate. The active-site Proton donor is the histidine 91. Residue asparagine 116 coordinates 5-amino-6-(D-ribitylamino)uracil. Arginine 130 contacts (2S)-2-hydroxy-3-oxobutyl phosphate.

The protein belongs to the DMRL synthase family. In terms of assembly, forms an icosahedral capsid composed of 60 subunits, arranged as a dodecamer of pentamers.

The enzyme catalyses (2S)-2-hydroxy-3-oxobutyl phosphate + 5-amino-6-(D-ribitylamino)uracil = 6,7-dimethyl-8-(1-D-ribityl)lumazine + phosphate + 2 H2O + H(+). It functions in the pathway cofactor biosynthesis; riboflavin biosynthesis; riboflavin from 2-hydroxy-3-oxobutyl phosphate and 5-amino-6-(D-ribitylamino)uracil: step 1/2. In terms of biological role, catalyzes the formation of 6,7-dimethyl-8-ribityllumazine by condensation of 5-amino-6-(D-ribitylamino)uracil with 3,4-dihydroxy-2-butanone 4-phosphate. This is the penultimate step in the biosynthesis of riboflavin. In Acinetobacter baumannii (strain AB0057), this protein is 6,7-dimethyl-8-ribityllumazine synthase.